Here is a 320-residue protein sequence, read N- to C-terminus: L-lactate dehydrogenase (320 aa).

NAD(+)-binding positions include Val19, Asp40, Arg45, and 85-86 (GA). Positions 88 and 94 each coordinate substrate. NAD(+)-binding positions include Ser107, 124-126 (ITN), and Ser149. 126–129 (NPVD) is a binding site for substrate. 154–157 (DSAR) provides a ligand contact to substrate. Residues Arg159 and His174 each contribute to the beta-D-fructose 1,6-bisphosphate site. The Proton acceptor role is filled by His181. Residue Tyr228 is modified to Phosphotyrosine. Position 237 (Thr237) interacts with substrate.

It belongs to the LDH/MDH superfamily. LDH family. As to quaternary structure, homotetramer.

It localises to the cytoplasm. It carries out the reaction (S)-lactate + NAD(+) = pyruvate + NADH + H(+). The protein operates within fermentation; pyruvate fermentation to lactate; (S)-lactate from pyruvate: step 1/1. With respect to regulation, allosterically activated by fructose 1,6-bisphosphate (FBP). Functionally, catalyzes the conversion of lactate to pyruvate. The sequence is that of L-lactate dehydrogenase from Bifidobacterium animalis subsp. lactis (strain AD011).